A 204-amino-acid polypeptide reads, in one-letter code: FMN-dependent NADH:quinone oxidoreductase (204 aa).

Residues Ser10 and 15 to 17 (SLS) each bind FMN.

It belongs to the azoreductase type 1 family. In terms of assembly, homodimer. FMN is required as a cofactor.

The catalysed reaction is 2 a quinone + NADH + H(+) = 2 a 1,4-benzosemiquinone + NAD(+). It catalyses the reaction N,N-dimethyl-1,4-phenylenediamine + anthranilate + 2 NAD(+) = 2-(4-dimethylaminophenyl)diazenylbenzoate + 2 NADH + 2 H(+). In terms of biological role, quinone reductase that provides resistance to thiol-specific stress caused by electrophilic quinones. Also exhibits azoreductase activity. Catalyzes the reductive cleavage of the azo bond in aromatic azo compounds to the corresponding amines. This Rhizobium johnstonii (strain DSM 114642 / LMG 32736 / 3841) (Rhizobium leguminosarum bv. viciae) protein is FMN-dependent NADH:quinone oxidoreductase.